The primary structure comprises 305 residues: Putative beta-lactamase HcpD (305 aa).

A signal peptide spans 1–27 (MIKSWTKKWFLILFLMASCFGHLVATT). TPR repeat units lie at residues 28-61 (GEKY…RMGV), 96-133 (HLAC…KGGV), 168-205 (GISC…KDGA), and 240-277 (GSGC…GFSG). Disulfide bonds link C55-C63, C91-C99, C127-C135, C163-C171, C199-C207, C235-C243, and C271-C279.

This sequence belongs to the hcp beta-lactamase family.

The protein resides in the secreted. The catalysed reaction is a beta-lactam + H2O = a substituted beta-amino acid. May hydrolyze 6-aminopenicillinic acid and 7-aminocephalosporanic acid (ACA) derivatives. Binds to penicillin. The chain is Putative beta-lactamase HcpD (hcpD) from Helicobacter pylori (strain J99 / ATCC 700824) (Campylobacter pylori J99).